Consider the following 96-residue polypeptide: Co-chaperonin GroES (96 aa).

Belongs to the GroES chaperonin family. As to quaternary structure, heptamer of 7 subunits arranged in a ring. Interacts with the chaperonin GroEL.

The protein resides in the cytoplasm. Its function is as follows. Together with the chaperonin GroEL, plays an essential role in assisting protein folding. The GroEL-GroES system forms a nano-cage that allows encapsulation of the non-native substrate proteins and provides a physical environment optimized to promote and accelerate protein folding. GroES binds to the apical surface of the GroEL ring, thereby capping the opening of the GroEL channel. The chain is Co-chaperonin GroES from Wolbachia pipientis wMel.